Reading from the N-terminus, the 178-residue chain is Transcription termination/antitermination protein NusG (178 aa).

The KOW domain maps to 130–159 (SVKVKEGPFANFIGTIEEIQLDKRKLKVHV).

This sequence belongs to the NusG family.

Functionally, participates in transcription elongation, termination and antitermination. The polypeptide is Transcription termination/antitermination protein NusG (Halalkalibacterium halodurans (strain ATCC BAA-125 / DSM 18197 / FERM 7344 / JCM 9153 / C-125) (Bacillus halodurans)).